The sequence spans 245 residues: Ubiquinone/menaquinone biosynthesis C-methyltransferase UbiE (245 aa).

S-adenosyl-L-methionine is bound by residues threonine 71, aspartate 92, and 118 to 119 (DA).

It belongs to the class I-like SAM-binding methyltransferase superfamily. MenG/UbiE family.

The enzyme catalyses a 2-demethylmenaquinol + S-adenosyl-L-methionine = a menaquinol + S-adenosyl-L-homocysteine + H(+). It carries out the reaction a 2-methoxy-6-(all-trans-polyprenyl)benzene-1,4-diol + S-adenosyl-L-methionine = a 5-methoxy-2-methyl-3-(all-trans-polyprenyl)benzene-1,4-diol + S-adenosyl-L-homocysteine + H(+). Its pathway is quinol/quinone metabolism; menaquinone biosynthesis; menaquinol from 1,4-dihydroxy-2-naphthoate: step 2/2. It participates in cofactor biosynthesis; ubiquinone biosynthesis. Methyltransferase required for the conversion of demethylmenaquinol (DMKH2) to menaquinol (MKH2) and the conversion of 2-polyprenyl-6-methoxy-1,4-benzoquinol (DDMQH2) to 2-polyprenyl-3-methyl-6-methoxy-1,4-benzoquinol (DMQH2). The chain is Ubiquinone/menaquinone biosynthesis C-methyltransferase UbiE from Neisseria meningitidis serogroup B (strain ATCC BAA-335 / MC58).